A 96-amino-acid chain; its full sequence is Co-chaperonin GroES (96 aa).

The protein belongs to the GroES chaperonin family. Heptamer of 7 subunits arranged in a ring. Interacts with the chaperonin GroEL.

Its subcellular location is the cytoplasm. Functionally, together with the chaperonin GroEL, plays an essential role in assisting protein folding. The GroEL-GroES system forms a nano-cage that allows encapsulation of the non-native substrate proteins and provides a physical environment optimized to promote and accelerate protein folding. GroES binds to the apical surface of the GroEL ring, thereby capping the opening of the GroEL channel. In Hahella chejuensis (strain KCTC 2396), this protein is Co-chaperonin GroES.